The primary structure comprises 65 residues: Large ribosomal subunit protein bL35 (65 aa).

The segment at 1-20 (MPKMKTNSGSKKRFTLTGTG) is disordered.

It belongs to the bacterial ribosomal protein bL35 family.

The sequence is that of Large ribosomal subunit protein bL35 from Bacteroides thetaiotaomicron (strain ATCC 29148 / DSM 2079 / JCM 5827 / CCUG 10774 / NCTC 10582 / VPI-5482 / E50).